Here is a 286-residue protein sequence, read N- to C-terminus: L-rhamnose-binding lectin CSL1 (286 aa).

2 consecutive SUEL-type lectin domains span residues 96-186 and 193-280; these read TTCE…YICL and TCEG…YTCL.

L-rhamnose binding lectin. Has hemagglutinating activity towards rabbit erythrocytes, but not human type B erythrocytes. Hemagglutinating activity is inhibited by smooth-type lipopolysaccharide (LPS) from K.pneumoniae, E.coli K-235, S.flexneri 1A, A.salmonicida and S.minnesota and rough-type LPS from S.flexneri, but not by rough-type LPS from E.coli K12 and E.coli EH100. Agglutinates E.coli K12 and B.subtilis. This is L-rhamnose-binding lectin CSL1 from Oncorhynchus keta (Chum salmon).